Consider the following 612-residue polypeptide: Cytoplasmic dynein 1 intermediate chain 2 (612 aa).

Basic and acidic residues-rich tracts occupy residues 1–13 (MSDK…ELER) and 20–43 (QIRE…KKEA). The disordered stretch occupies residues 1–188 (MSDKSDLKAE…PHELTEEEKQ (188 aa)). The residue at position 2 (serine 2) is an N-acetylserine. At serine 51 the chain carries Diphosphoserine. Phosphoserine occurs at positions 51 and 84. Residues 82–91 (PSSKSVSTPS) are compositionally biased toward low complexity. Position 89 is a phosphothreonine (threonine 89). Phosphoserine is present on residues serine 91, serine 95, and serine 98. A compositionally biased stretch (basic and acidic residues) spans 164 to 188 (EKTLKKDEENDSKAPPHELTEEEKQ). WD repeat units lie at residues 251–300 (SKHR…TTPE), 304–344 (HCQS…RTPV), 353–394 (AHTH…HPQD), 403–443 (SKAV…AGIS), 448–493 (GHQG…PLYS), 496–536 (DNSD…EVPT), and 542–581 (EGNP…AVPR).

This sequence belongs to the dynein intermediate chain family. In terms of assembly, homodimer. The cytoplasmic dynein 1 complex consists of two catalytic heavy chains (HCs) and a number of non-catalytic subunits presented by intermediate chains (ICs), light intermediate chains (LICs) and light chains (LCs); the composition seems to vary in respect to the IC, LIC and LC composition. The heavy chain homodimer serves as a scaffold for the probable homodimeric assembly of the respective non-catalytic subunits. The ICs and LICs bind directly to the HC dimer and the LCs assemble on the IC dimer. Interacts with DYNLT3. Interacts with DYNLT1. Interacts (dephosphorylated at Ser-84) with DCTN1. Interacts with BICD2. Interacts with SPEF2. Interacts with CFAP61. Post-translationally, the phosphorylation status of Ser-84 appears to be involved in dynactin-dependent target binding. Pyrophosphorylation by 5-diphosphoinositol pentakisphosphate (5-IP7) promotes interaction with DCTN1. Serine pyrophosphorylation is achieved by Mg(2+)-dependent, but enzyme independent transfer of a beta-phosphate from a inositol pyrophosphate to a pre-phosphorylated serine residue.

The protein resides in the cytoplasm. The protein localises to the cytoskeleton. Acts as one of several non-catalytic accessory components of the cytoplasmic dynein 1 complex that are thought to be involved in linking dynein to cargos and to adapter proteins that regulate dynein function. Cytoplasmic dynein 1 acts as a motor for the intracellular retrograde motility of vesicles and organelles along microtubules. The intermediate chains mediate the binding of dynein to dynactin via its 150 kDa component (p150-glued) DCTN1. Involved in membrane-transport, such as Golgi apparatus, late endosomes and lysosomes. The chain is Cytoplasmic dynein 1 intermediate chain 2 (Dync1i2) from Mus musculus (Mouse).